The chain runs to 448 residues: Phosphoglucosamine mutase (448 aa).

The active-site Phosphoserine intermediate is the Ser-100. Mg(2+) is bound by residues Ser-100, Asp-240, Asp-242, and Asp-244. Phosphoserine is present on Ser-100.

Belongs to the phosphohexose mutase family. In terms of assembly, homodimer, may form a complex with CdaA. Mg(2+) is required as a cofactor. Post-translationally, activated by phosphorylation.

The catalysed reaction is alpha-D-glucosamine 1-phosphate = D-glucosamine 6-phosphate. Functionally, catalyzes the conversion of glucosamine-6-phosphate to glucosamine-1-phosphate. Glucosamine-1-phosphate is used for cell wall biosynthesis. In Bacillus subtilis (strain 168), this protein is Phosphoglucosamine mutase.